Here is a 539-residue protein sequence, read N- to C-terminus: GMP synthase [glutamine-hydrolyzing] (539 aa).

One can recognise a Glutamine amidotransferase type-1 domain in the interval 4-203 (KILILDFGSQ…VHDICGCKSD (200 aa)). Catalysis depends on Cys-82, which acts as the Nucleophile. Catalysis depends on residues His-177 and Glu-179. Positions 204–395 (WNMPDYIAEA…LGLPHDMVYR (192 aa)) constitute a GMPS ATP-PPase domain. 231–237 (SGGVDSS) contacts ATP.

In terms of assembly, homodimer.

It carries out the reaction XMP + L-glutamine + ATP + H2O = GMP + L-glutamate + AMP + diphosphate + 2 H(+). It functions in the pathway purine metabolism; GMP biosynthesis; GMP from XMP (L-Gln route): step 1/1. Its function is as follows. Catalyzes the synthesis of GMP from XMP. The sequence is that of GMP synthase [glutamine-hydrolyzing] from Janthinobacterium sp. (strain Marseille) (Minibacterium massiliensis).